Consider the following 324-residue polypeptide: Proto-oncogene Mas (324 aa).

Topologically, residues 1-35 (MDQSNMTSLAEEKAMNTSSRNASLGSSHPPIPIVH) are extracellular. N-linked (GlcNAc...) asparagine glycosylation is found at N5, N16, and N21. The chain crosses the membrane as a helical span at residues 36–60 (WVIMSISPLGFVENGILLWFLCFRM). The Cytoplasmic portion of the chain corresponds to 61-64 (RRNP). The helical transmembrane segment at 65–86 (FTVYITHLSIADISLLFCIFIL) threads the bilayer. At 87–103 (SIDYALDYELSSGHHYT) the chain is on the extracellular side. The chain crosses the membrane as a helical span at residues 104–127 (IVTLSVTFLFGYNTGLYLLTAISV). The Cytoplasmic portion of the chain corresponds to 128–148 (ERCLSVLYPIWYRCHRPKHQS). A helical transmembrane segment spans residues 149-171 (AFVCALLWALSCLVTTMEYVMCI). The Extracellular portion of the chain corresponds to 172-184 (DSGEESHSRSDCR). A helical membrane pass occupies residues 185-205 (AVIIFIAILSFLVFTPLMLVS). At 206-223 (STILVVKIRKNTWASHSS) the chain is on the cytoplasmic side. A helical membrane pass occupies residues 224–244 (KLYIVIMVTIIIFLIFAMPMR). At 245–262 (VLYLLYYEYWSAFGNLHN) the chain is on the extracellular side. Residues 263 to 283 (ISLLFSTINSSANPFIYFFVG) traverse the membrane as a helical segment. Residues 284-324 (SSKKKRFRESLKVVLTRAFKDEMQPRRQEGNGNTVSIETVV) are Cytoplasmic-facing.

It belongs to the G-protein coupled receptor 1 family. Interacts with AGTR1. Interacts with FLNA (via filamin repeat 21); increases PKA-mediated phosphorylation of FLNA.

It localises to the cell membrane. Functionally, acts specifically as a functional antagonist of AGTR1 (angiotensin-2 type 1 receptor), although it up-regulates AGTR1 receptor levels. Positive regulation of AGTR1 levels occurs through activation of the G-proteins GNA11 and GNAQ, and stimulation of the protein kinase C signaling cascade. The antagonist effect on AGTR1 function is probably due to AGTR1 being physically altered by MAS1. Receptor for angiotensin 1-7. The polypeptide is Proto-oncogene Mas (Mas1) (Mus musculus (Mouse)).